The following is a 350-amino-acid chain: Geranylgeranyl pyrophosphate synthase (350 aa).

Isopentenyl diphosphate contacts are provided by lysine 66, arginine 69, and histidine 98. Mg(2+)-binding residues include aspartate 105 and aspartate 109. Position 114 (arginine 114) interacts with dimethylallyl diphosphate. Arginine 115 lines the isopentenyl diphosphate pocket. Dimethylallyl diphosphate-binding residues include lysine 200, threonine 201, glutamine 236, asparagine 243, and lysine 263.

It belongs to the FPP/GGPP synthase family. The cofactor is Mg(2+).

The enzyme catalyses isopentenyl diphosphate + dimethylallyl diphosphate = (2E)-geranyl diphosphate + diphosphate. It catalyses the reaction isopentenyl diphosphate + (2E)-geranyl diphosphate = (2E,6E)-farnesyl diphosphate + diphosphate. The catalysed reaction is isopentenyl diphosphate + (2E,6E)-farnesyl diphosphate = (2E,6E,10E)-geranylgeranyl diphosphate + diphosphate. It functions in the pathway secondary metabolite biosynthesis; terpenoid biosynthesis. In terms of biological role, geranylgeranyl pyrophosphate synthase; part of the gene cluster that mediates the biosynthesis of pleuromutilin, a tricyclic diterpene showing antibacterial properties. The geranylgeranyl diphosphate (GGPP) synthase ple4 catalyzes the first step in pleuromutilin biosynthesis. GGPP is then substrate of the premutilin synthase (PS) ple3 to yield premutilin. Premutilin synthase is a bifunctional enzyme composed of the fusion of a class II diterpene cyclase (DTC) and a class I diterpene synthase (DTS), with the corresponding domains and active sites containing characteristic aspartate-rich motifs. GGPP is first converted to mutildienyl-diphosphate (MPP) at the class II DTC site. MPP is subsequently further cyclized at the class I DTS site, followed by a 1,5-hydride shift and addition of water prior to terminating deprotonation, to yield premutilin. The cytochrome P450 monooxygenases ple5 and ple6 hydroxylate premutilin at C-11 and C-3, respectively, producing 11-hydroxypremutilin and 3-hydroxypremutilin. The combination of the actions of both ple5 and ple6 leads to the production of 3,11-dihydroxypremutilin. The short chain dehydrogenase ple7 further converts 3,11-dihydroxypremutilin into mutilin. The acetyltransferase ple2 then acetylates mutilin to produce 14-O-acetylmutilin. Finally, the cytochrome P450 monooxygenase ple1 catalyzes hydroxylation on the alpha position of the acetyl side chain of 14-O-acetylmutilin to yield pleuromutilin. The chain is Geranylgeranyl pyrophosphate synthase from Rhodocybe pseudopiperita (Clitopilus pseudopiperitus).